The chain runs to 364 residues: Aminomethyltransferase (364 aa).

It belongs to the GcvT family. In terms of assembly, the glycine cleavage system is composed of four proteins: P, T, L and H.

The catalysed reaction is N(6)-[(R)-S(8)-aminomethyldihydrolipoyl]-L-lysyl-[protein] + (6S)-5,6,7,8-tetrahydrofolate = N(6)-[(R)-dihydrolipoyl]-L-lysyl-[protein] + (6R)-5,10-methylene-5,6,7,8-tetrahydrofolate + NH4(+). The glycine cleavage system catalyzes the degradation of glycine. This is Aminomethyltransferase from Shigella dysenteriae serotype 1 (strain Sd197).